An 81-amino-acid chain; its full sequence is Cysteine-rich and transmembrane domain-containing protein PCC1 (81 aa).

Over residues 1–22 the composition is skewed to polar residues; the sequence is MNQSAQNYFSVQKPSETSSGPY. Positions 1-34 are disordered; the sequence is MNQSAQNYFSVQKPSETSSGPYTSPPPIGYPTRD. Residues 56-74 traverse the membrane as a helical segment; that stretch reads AIMSCFSTCMECIFCCGVC.

This sequence belongs to the CYSTM1 family. Expressed at very low levels in seedlings and petioles, and at higher levels in leaves. Also present in phloem sap.

It is found in the cell membrane. Functionally, modulates resistance against pathogens including oomycetes (e.g. Hyaloperonospora parasitica and Phytophthora brassicae) and fungi (e.g. Phytophthora brassicae). Controls the abscisic acid-mediated (ABA) signaling pathways. Regulator of the flowering time in response to stress (e.g. UV-C). Regulates polar lipid content; promotes phosphatidylinositol (PI) and 18:0 but prevents 18:2 and 18:3 polar lipids accumulation. The polypeptide is Cysteine-rich and transmembrane domain-containing protein PCC1 (PCC1) (Arabidopsis thaliana (Mouse-ear cress)).